Here is a 695-residue protein sequence, read N- to C-terminus: Testis-specific Y-encoded-like protein 2 (695 aa).

The disordered stretch occupies residues 1–56 (MDRPDEGPPAKTRRLSSSESPQRDPPPPPPPPPLLRLPLPPPQQRPRLQEETEAAQ). Lysine 11 is covalently cross-linked (Glycyl lysine isopeptide (Lys-Gly) (interchain with G-Cter in SUMO2)). Phosphoserine occurs at positions 18 and 20. Residues 23–44 (RDPPPPPPPPPLLRLPLPPPQQ) are compositionally biased toward pro residues. Residues lysine 163 and lysine 165 each participate in a glycyl lysine isopeptide (Lys-Gly) (interchain with G-Cter in SUMO2) cross-link. The interval 175–207 (EDEDEQESMRSSRRRRRRRRRKQRKVKRESRQR) is disordered. A compositionally biased stretch (basic residues) spans 185 to 202 (SSRRRRRRRRRKQRKVKR). Threonine 340 carries the post-translational modification Phosphothreonine. Disordered stretches follow at residues 471 to 603 (DINE…RDIE) and 632 to 695 (VEEE…GKTG). A compositionally biased stretch (basic and acidic residues) spans 481–491 (SPDHDEVRNET). Over residues 496–518 (ESADDNETTDNNESADDNNENPE) the composition is skewed to acidic residues. Over residues 519 to 535 (DNNKNADDNKENPDNNK) the composition is skewed to basic and acidic residues. Residues 539–557 (GNNFFNGGFWGSHGNNQDS) show a composition bias toward low complexity. 2 stretches are compositionally biased toward acidic residues: residues 558–601 (SDSD…DDRD) and 632–677 (VEEE…DLED). Phosphoserine is present on residues serine 670 and serine 673.

The protein belongs to the nucleosome assembly protein (NAP) family. In terms of assembly, interacts with histones. Interacts with CASK. Part of a complex containing CASK, TBR1 and TSPYL2. In terms of processing, phosphorylation at Ser-20 and/or Thr-340 impairs function on cell proliferation. Ubiquitously expressed, with highest levels in testis, adrenal gland, cerebral cortex, ovary, skeletal muscle and spleen. Present in testis, adrenal gland, cerebral cortex and ovary (at protein level).

It is found in the nucleus. It localises to the cytoplasm. In terms of biological role, part of the CASK/TBR1/TSPYL2 transcriptional complex which modulates gene expression in response to neuronal synaptic activity, probably by facilitating nucleosome assembly. May inhibit cell proliferation by inducing p53-dependent CDKN1A expression. In Macaca fascicularis (Crab-eating macaque), this protein is Testis-specific Y-encoded-like protein 2 (TSPYL2).